Reading from the N-terminus, the 352-residue chain is Biotin synthase (352 aa).

The region spanning 44–262 is the Radical SAM core domain; sequence NRVQVSTLLS…LAVARILMPQ (219 aa). Residues Cys59, Cys63, and Cys66 each contribute to the [4Fe-4S] cluster site. Residues Cys103, Cys134, Cys194, and Arg266 each coordinate [2Fe-2S] cluster.

The protein belongs to the radical SAM superfamily. Biotin synthase family. In terms of assembly, homodimer. The cofactor is [4Fe-4S] cluster. It depends on [2Fe-2S] cluster as a cofactor.

The catalysed reaction is (4R,5S)-dethiobiotin + (sulfur carrier)-SH + 2 reduced [2Fe-2S]-[ferredoxin] + 2 S-adenosyl-L-methionine = (sulfur carrier)-H + biotin + 2 5'-deoxyadenosine + 2 L-methionine + 2 oxidized [2Fe-2S]-[ferredoxin]. It participates in cofactor biosynthesis; biotin biosynthesis; biotin from 7,8-diaminononanoate: step 2/2. Functionally, catalyzes the conversion of dethiobiotin (DTB) to biotin by the insertion of a sulfur atom into dethiobiotin via a radical-based mechanism. The polypeptide is Biotin synthase (Pseudomonas savastanoi pv. phaseolicola (strain 1448A / Race 6) (Pseudomonas syringae pv. phaseolicola (strain 1448A / Race 6))).